The following is a 147-amino-acid chain: Deoxyuridine 5'-triphosphate nucleotidohydrolase (147 aa).

A Mg(2+)-binding site is contributed by R24. Residues 68-70, 82-85, Y88, G93, I95, and R111 each bind dUTP; these read PRS and GVID.

The protein belongs to the dUTPase family. Requires Mg(2+) as cofactor.

The enzyme catalyses dUTP + H2O = dUMP + diphosphate + H(+). Its function is as follows. This enzyme is involved in nucleotide metabolism: it produces dUMP, the immediate precursor of thymidine nucleotides and it decreases the intracellular concentration of dUTP so that uracil cannot be incorporated into DNA. The polypeptide is Deoxyuridine 5'-triphosphate nucleotidohydrolase (OPG046) (Oryctolagus cuniculus (Rabbit)).